The chain runs to 289 residues: Glycine--tRNA ligase alpha subunit (289 aa).

The protein belongs to the class-II aminoacyl-tRNA synthetase family. As to quaternary structure, tetramer of two alpha and two beta subunits.

Its subcellular location is the cytoplasm. It catalyses the reaction tRNA(Gly) + glycine + ATP = glycyl-tRNA(Gly) + AMP + diphosphate. The protein is Glycine--tRNA ligase alpha subunit of Prochlorococcus marinus (strain MIT 9515).